The following is a 750-amino-acid chain: Sulfhydryl oxidase 1 (750 aa).

An N-terminal signal peptide occupies residues 1 to 32 (MRRCGRHSGPPSLLLLLLLLPPLLLSVPGAYA). The Thioredoxin domain occupies 33-159 (ARLSVLYSSS…RMRLIDALES (127 aa)). Residues C73 and C76 each act as nucleophile in the active site. Cystine bridges form between C73/C76 and C104/C113. Residues N133 and N246 are each glycosylated (N-linked (GlcNAc...) asparagine). A disulfide bridge links C396 with C408. The ERV/ALR sulfhydryl oxidase domain maps to 399–506 (SEPHFRGFPC…EDPQFPKVQW (108 aa)). Residues R404, W411, H415, D454, H458, 481–488 (WTSHNRVN), K503, and W506 each bind FAD. A disulfide bridge links C452 with C455. C512 and C515 are oxidised to a cystine. Disordered regions lie at residues 545 to 567 (VRDP…ASPN) and 585 to 632 (EQAA…PEHT). Positions 587 to 597 (AASAASPGATA) are enriched in low complexity. A helical transmembrane segment spans residues 710–730 (FLDISLCVGLYSVSFMGLLAM).

The protein belongs to the quiescin-sulfhydryl oxidase (QSOX) family. Monomer. The cofactor is FAD. In terms of processing, N-glycosylated. O-glycosylated on Thr and Ser residues. As to expression, isoform 3: Detected in seminal vesicle fluid (at protein level). Isoform 1: Detected in brain, hypophysis, heart, testis and the seminal vesicle. Isoform 3: Highly expressed in the seminal vesicles followed by testis, heart, brain, thymus, hypophysis and lung. Also expressed in prostate, kidney, spleen, liver.

The protein localises to the golgi apparatus membrane. The protein resides in the secreted. It carries out the reaction 2 R'C(R)SH + O2 = R'C(R)S-S(R)CR' + H2O2. Its function is as follows. Catalyzes the oxidation of sulfhydryl groups in peptide and protein thiols to disulfides with the reduction of oxygen to hydrogen peroxide. Plays a role in disulfide bond formation in a variety of extracellular proteins. In fibroblasts, required for normal incorporation of laminin into the extracellular matrix, and thereby for normal cell-cell adhesion and cell migration. The sequence is that of Sulfhydryl oxidase 1 (Qsox1) from Rattus norvegicus (Rat).